The chain runs to 208 residues: CASP-like protein 3A1 (208 aa).

Polar residues-rich tracts occupy residues 1 to 11 (MGSFANGQNGS) and 17 to 33 (TPAT…TTSA). A disordered region spans residues 1–33 (MGSFANGQNGSELGIQTPATGSNAALEPPTTSA). At 1–43 (MGSFANGQNGSELGIQTPATGSNAALEPPTTSAAAPRCPRLGM) the chain is on the cytoplasmic side. Residues 44–64 (AMVAARAAALVMALLSVSLMV) form a helical membrane-spanning segment. Residues 65–92 (SAKQRGTLAIFGIEIPLYAKWSLSDSLQ) are Extracellular-facing. A helical transmembrane segment spans residues 93 to 113 (SLVGISAAAAAYSLAQLLSIA). The Cytoplasmic portion of the chain corresponds to 114–128 (HTALKKAPVVPSRRY). The helical transmembrane segment at 129–149 (AWMLLAGDQVFAYAMLSAGSA) threads the bilayer. The Extracellular portion of the chain corresponds to 150–183 (AAAVANLNRTGVRHTALPNFCKPLPRFCDLSAAS). A glycan (N-linked (GlcNAc...) asparagine) is linked at Asn-157. Residues 184–204 (IACAFLGCAFLAASAVIDVIW) traverse the membrane as a helical segment. The Cytoplasmic portion of the chain corresponds to 205–208 (LSRL).

It belongs to the Casparian strip membrane proteins (CASP) family. In terms of assembly, homodimer and heterodimers.

The protein resides in the cell membrane. In Hordeum vulgare subsp. vulgare (Domesticated barley), this protein is CASP-like protein 3A1.